A 144-amino-acid chain; its full sequence is D-aminoacyl-tRNA deacylase (144 aa).

The short motif at 136–137 (GP) is the Gly-cisPro motif, important for rejection of L-amino acids element.

The protein belongs to the DTD family. As to quaternary structure, homodimer.

The protein resides in the cytoplasm. It catalyses the reaction glycyl-tRNA(Ala) + H2O = tRNA(Ala) + glycine + H(+). The catalysed reaction is a D-aminoacyl-tRNA + H2O = a tRNA + a D-alpha-amino acid + H(+). In terms of biological role, an aminoacyl-tRNA editing enzyme that deacylates mischarged D-aminoacyl-tRNAs. Also deacylates mischarged glycyl-tRNA(Ala), protecting cells against glycine mischarging by AlaRS. Acts via tRNA-based rather than protein-based catalysis; rejects L-amino acids rather than detecting D-amino acids in the active site. By recycling D-aminoacyl-tRNA to D-amino acids and free tRNA molecules, this enzyme counteracts the toxicity associated with the formation of D-aminoacyl-tRNA entities in vivo and helps enforce protein L-homochirality. The polypeptide is D-aminoacyl-tRNA deacylase (Corynebacterium glutamicum (strain R)).